We begin with the raw amino-acid sequence, 122 residues long: Small ribosomal subunit protein uS8c (122 aa).

Belongs to the universal ribosomal protein uS8 family. As to quaternary structure, part of the 30S ribosomal subunit.

It is found in the plastid. It localises to the chloroplast. One of the primary rRNA binding proteins, it binds directly to 16S rRNA central domain where it helps coordinate assembly of the platform of the 30S subunit. The sequence is that of Small ribosomal subunit protein uS8c (rps8) from Ostreococcus tauri.